The primary structure comprises 422 residues: Glutamate-1-semialdehyde 2,1-aminomutase (422 aa).

At Lys258 the chain carries N6-(pyridoxal phosphate)lysine.

This sequence belongs to the class-III pyridoxal-phosphate-dependent aminotransferase family. HemL subfamily. As to quaternary structure, homodimer. Pyridoxal 5'-phosphate is required as a cofactor.

It localises to the cytoplasm. It catalyses the reaction (S)-4-amino-5-oxopentanoate = 5-aminolevulinate. The protein operates within porphyrin-containing compound metabolism; protoporphyrin-IX biosynthesis; 5-aminolevulinate from L-glutamyl-tRNA(Glu): step 2/2. In Chlamydia trachomatis serovar D (strain ATCC VR-885 / DSM 19411 / UW-3/Cx), this protein is Glutamate-1-semialdehyde 2,1-aminomutase.